Here is a 336-residue protein sequence, read N- to C-terminus: Probable assembly chaperone of rpl4 (336 aa).

TPR repeat units follow at residues 39–72 (GRAF…SKNL), 75–108 (DQGY…LERL), 110–143 (IDKG…QPDA), and 162–195 (AEAL…ISRA). A disordered region spans residues 316–336 (DEENEEAEWETSENEEEMDED).

This sequence belongs to the ACL4 family.

It localises to the cytoplasm. The protein resides in the nucleus. The protein localises to the nucleolus. Acts as a chaperone for the L4 ribosomal subunit encoded by rpl4A and rpl4B, required for hierarchical ribosome assembly. Shields ribosomal protein L4 until timely release and insertion into the pre-ribosome is possible, once ribosomal protein L18 is present. This is Probable assembly chaperone of rpl4 from Schizosaccharomyces pombe (strain 972 / ATCC 24843) (Fission yeast).